The sequence spans 293 residues: Acetylglutamate kinase (293 aa).

Substrate-binding positions include 68-69, R90, and N189; that span reads GG.

Belongs to the acetylglutamate kinase family. ArgB subfamily.

It localises to the cytoplasm. The enzyme catalyses N-acetyl-L-glutamate + ATP = N-acetyl-L-glutamyl 5-phosphate + ADP. Its pathway is amino-acid biosynthesis; L-arginine biosynthesis; N(2)-acetyl-L-ornithine from L-glutamate: step 2/4. Catalyzes the ATP-dependent phosphorylation of N-acetyl-L-glutamate. The chain is Acetylglutamate kinase from Mycolicibacterium smegmatis (strain ATCC 700084 / mc(2)155) (Mycobacterium smegmatis).